The chain runs to 370 residues: Actin-related protein 2/3 complex subunit 1A (370 aa).

WD repeat units lie at residues 6–45, 50–89, 140–179, 202–241, 244–284, and 322–365; these read FLLEPITCHAWNRDRTQIALSPNNHEVHIYKKNGSQWVKA, EHNGHITGIDWAPKSDRIVTCGADRNAYVWSQKDGVWKPT, PIRSTVLSLDWHPNNVLLAAGSCDFKCRVFSAYIKEVDEK, GTGGWVHGVSFSASGSRLAWVSHDSTVSVADASKSVQVST, TEFL…TFVS, and LHQN…SSIQ.

Belongs to the WD repeat ARPC1 family. In terms of assembly, probable component of the Arp2/3 complex in which it may replace ARPC1B. In addition to its role in the cytoplasmic cytoskeleton, the Arp2/3 complex also promotes actin polymerization in the nucleus, thereby regulating gene transcription and repair of damaged DNA.

Its subcellular location is the cytoplasm. The protein localises to the cytoskeleton. The protein resides in the nucleus. In terms of biological role, probably functions as a component of the Arp2/3 complex which is involved in regulation of actin polymerization and together with an activating nucleation-promoting factor (NPF) mediates the formation of branched actin networks. This chain is Actin-related protein 2/3 complex subunit 1A (ARPC1A), found in Homo sapiens (Human).